Here is a 186-residue protein sequence, read N- to C-terminus: Elongation factor P (186 aa).

This sequence belongs to the elongation factor P family.

The protein resides in the cytoplasm. It functions in the pathway protein biosynthesis; polypeptide chain elongation. In terms of biological role, involved in peptide bond synthesis. Stimulates efficient translation and peptide-bond synthesis on native or reconstituted 70S ribosomes in vitro. Probably functions indirectly by altering the affinity of the ribosome for aminoacyl-tRNA, thus increasing their reactivity as acceptors for peptidyl transferase. The protein is Elongation factor P of Cupriavidus necator (strain ATCC 17699 / DSM 428 / KCTC 22496 / NCIMB 10442 / H16 / Stanier 337) (Ralstonia eutropha).